A 417-amino-acid polypeptide reads, in one-letter code: Serine hydroxymethyltransferase 2 (417 aa).

(6S)-5,6,7,8-tetrahydrofolate-binding positions include leucine 121 and 125–127; that span reads GHL. Lysine 230 carries the N6-(pyridoxal phosphate)lysine modification. 355-357 lines the (6S)-5,6,7,8-tetrahydrofolate pocket; it reads SPF.

This sequence belongs to the SHMT family. In terms of assembly, homodimer. Pyridoxal 5'-phosphate serves as cofactor.

The protein localises to the cytoplasm. The enzyme catalyses (6R)-5,10-methylene-5,6,7,8-tetrahydrofolate + glycine + H2O = (6S)-5,6,7,8-tetrahydrofolate + L-serine. It participates in one-carbon metabolism; tetrahydrofolate interconversion. It functions in the pathway amino-acid biosynthesis; glycine biosynthesis; glycine from L-serine: step 1/1. Catalyzes the reversible interconversion of serine and glycine with tetrahydrofolate (THF) serving as the one-carbon carrier. This reaction serves as the major source of one-carbon groups required for the biosynthesis of purines, thymidylate, methionine, and other important biomolecules. Also exhibits THF-independent aldolase activity toward beta-hydroxyamino acids, producing glycine and aldehydes, via a retro-aldol mechanism. This chain is Serine hydroxymethyltransferase 2, found in Colwellia psychrerythraea (strain 34H / ATCC BAA-681) (Vibrio psychroerythus).